The primary structure comprises 422 residues: Testin (422 aa).

The PET domain maps to M92–D199. 2 disordered regions span residues Q135–S162 and L194–S226. Over residues L194–D212 the composition is skewed to basic and acidic residues. LIM zinc-binding domains are found at residues Y234–E297, P299–V359, and Q362–S422.

This sequence belongs to the prickle / espinas / testin family. As to quaternary structure, interacts via LIM domain 1 with ZYX. Interacts (via LIM domain 3) with ENAH and VASP. Interacts with ALKBH4, talin, actin, alpha-actinin, GRIP1 and PXN. Interacts (via LIM domain 2) with ACTL7A (via N-terminus). Heterodimer with ACTL7A; the heterodimer interacts with ENAH to form a heterotrimer.

Its subcellular location is the cytoplasm. It is found in the cell junction. It localises to the focal adhesion. Its function is as follows. Scaffold protein that may play a role in cell adhesion, cell spreading and in the reorganization of the actin cytoskeleton. Plays a role in the regulation of cell proliferation. May act as a tumor suppressor. In Monodelphis domestica (Gray short-tailed opossum), this protein is Testin (TES).